A 478-amino-acid polypeptide reads, in one-letter code: Puromycin-sensitive aminopeptidase-like protein (478 aa).

Residues E180 and 316–320 (GAMEN) contribute to the substrate site. Zn(2+) is bound at residue H352. E353 serves as the catalytic Proton acceptor. Residues H356 and E375 each contribute to the Zn(2+) site.

Belongs to the peptidase M1 family. Zn(2+) is required as a cofactor.

In terms of biological role, aminopeptidase with broad substrate specificity to several peptides. This is Puromycin-sensitive aminopeptidase-like protein (NPEPPSL1) from Homo sapiens (Human).